Reading from the N-terminus, the 394-residue chain is Elongation factor Tu (394 aa).

Residues 10-204 enclose the tr-type G domain; it reads KEHANIGTIG…AVDTYIPTPE (195 aa). The segment at 19–26 is G1; that stretch reads GHVDHGKT. 19 to 26 is a GTP binding site; sequence GHVDHGKT. Thr-26 lines the Mg(2+) pocket. The G2 stretch occupies residues 60–64; the sequence is GITIN. Residues 81–84 are G3; the sequence is DCPG. Residues 81–85 and 136–139 each bind GTP; these read DCPGH and NKVD. The G4 stretch occupies residues 136-139; the sequence is NKVD. The segment at 174 to 176 is G5; sequence SAL.

It belongs to the TRAFAC class translation factor GTPase superfamily. Classic translation factor GTPase family. EF-Tu/EF-1A subfamily. Monomer.

The protein resides in the cytoplasm. The enzyme catalyses GTP + H2O = GDP + phosphate + H(+). In terms of biological role, GTP hydrolase that promotes the GTP-dependent binding of aminoacyl-tRNA to the A-site of ribosomes during protein biosynthesis. The sequence is that of Elongation factor Tu from Staphylococcus aureus (strain COL).